The chain runs to 539 residues: Prolyl 4-hydroxylase subunit alpha-2 (539 aa).

The signal sequence occupies residues 1-16 (MRAVLLVCLLAGLAHA). A glycan (N-linked (GlcNAc...) asparagine) is linked at N110. A Fe2OG dioxygenase domain is found at 401 to 509 (TSEELQVANY…KWVSNKWIHE (109 aa)). 3 residues coordinate Fe cation: H419, D421, and H490. K500 contributes to the 2-oxoglutarate binding site.

Belongs to the P4HA family. As to quaternary structure, heterotetramer of two alpha chains and two beta chains. Exist either as a phy-2(2)/pdi-2(2) tetramer or as a phy-1/phy-2/pdi-2(2) tetramer. Requires Fe(2+) as cofactor. It depends on L-ascorbate as a cofactor.

Its subcellular location is the endoplasmic reticulum lumen. The enzyme catalyses L-prolyl-[collagen] + 2-oxoglutarate + O2 = trans-4-hydroxy-L-prolyl-[collagen] + succinate + CO2. Its function is as follows. Catalyzes the post-translational formation of 4-hydroxyproline in -Xaa-Pro-Gly- sequences in collagens and other proteins. This is Prolyl 4-hydroxylase subunit alpha-2 (phy-2) from Caenorhabditis elegans.